We begin with the raw amino-acid sequence, 533 residues long: uncharacterized protein (533 aa).

Composition is skewed to polar residues over residues 30–43 (SQQG…VKNH), 79–91 (NAGT…THLS), 231–247 (NVKS…SSSA), and 254–263 (GRQSNSPNSN). 2 disordered regions span residues 30 to 92 (SQQG…HLSA) and 221 to 274 (SLSP…PGAS). The residue at position 336 (Ser336) is a Phosphoserine. Residues 475–510 (HPSLSNSAASPPVSSPGLRRSHIPVHEGLKHTRDGV) are disordered. Positions 476-490 (PSLSNSAASPPVSSP) are enriched in low complexity. Residues 498 to 510 (PVHEGLKHTRDGV) are compositionally biased toward basic and acidic residues.

The protein resides in the nucleus. This is an uncharacterized protein from Schizosaccharomyces pombe (strain 972 / ATCC 24843) (Fission yeast).